A 320-amino-acid chain; its full sequence is MTSSDLTPRQNWTREEIAAIYDLPLDQLFARALAVKAAHWADGAVQKSQLLSIKTGGCAENCGYCSQSASFKTGLKAEKLLPVEEVVDAARRAKANGADRFCMGAAWRSLKDRDLPKVAEMISAVKAEGLETCVTLGMLEEGQAEALKEAGLDYYNHNLDTSREYYSTVVTTRTFDDRIETLGRARQAGIKLCCGGILGMGESRSDRVGLIHELSLLSPHPESVPVNKLVPIEGTPLANSEELDTLELARAIAVCRIVFPKSWVRLSAGRETMSAEGQALCILAGANSIFVGDRLLTTANPAMDKDARLLESVGGGCSKC.

A Radical SAM core domain is found at 43–270; the sequence is GAVQKSQLLS…KSWVRLSAGR (228 aa). Residues cysteine 58, cysteine 62, and cysteine 65 each contribute to the [4Fe-4S] cluster site. Residues cysteine 102, cysteine 133, cysteine 193, and arginine 265 each coordinate [2Fe-2S] cluster.

Belongs to the radical SAM superfamily. Biotin synthase family. As to quaternary structure, homodimer. [4Fe-4S] cluster is required as a cofactor. The cofactor is [2Fe-2S] cluster.

The enzyme catalyses (4R,5S)-dethiobiotin + (sulfur carrier)-SH + 2 reduced [2Fe-2S]-[ferredoxin] + 2 S-adenosyl-L-methionine = (sulfur carrier)-H + biotin + 2 5'-deoxyadenosine + 2 L-methionine + 2 oxidized [2Fe-2S]-[ferredoxin]. The protein operates within cofactor biosynthesis; biotin biosynthesis; biotin from 7,8-diaminononanoate: step 2/2. In terms of biological role, catalyzes the conversion of dethiobiotin (DTB) to biotin by the insertion of a sulfur atom into dethiobiotin via a radical-based mechanism. The polypeptide is Biotin synthase (Hyphomonas neptunium (strain ATCC 15444)).